The following is a 511-amino-acid chain: MKFWTKEEEQDIQKIEKNPVRSFSAPDNVDGAKEIHTNLLAPQLGHAIIPSDAQSEGTIPVKELIKSYRALAEYHEVDDAIQEIVDEAIVYENDKEVVWLNLDNTDFSENIKAKINEEFDRVVSLLQMRKHGYKWFRKWYVDSRIYFHKILDKDNNIIELRPLNPMKMELVREIQKETIDGVEVVKGTLEYYVYKQSDYKMPSWMSATNRAQTSFRIPKDAIVFAHSGLMRGCADDPYIIGYLDRAIKPANQLKMLEDALVIYRLARAPERRVFYVDVGNLPTQKAQQYVNGIMQNVKNRVVYDTQTGQVKNTTNAMSMLEDYYLPRREGSKGTEVSTLPGGQSLGDIEDVLYFNRKLYKAMRIPTSRAASEDQTGGINFGQGAEITRDELKFTKFVKRLQTKFETVITDPLKHQLIVNNIITEEEWDANHEKLYVVFNQDSYFEEAKELEILNSRMNAMRDIQDYAGKYYSHKYIQKNILRLSDDQITAMQSEIDEEETNPRFQQDDQGF.

This sequence belongs to the Tevenvirinae portal protein family. Homododecamer. Interacts with the large terminase subunit. Interacts with the major capsid protein. Interacts with the capsid vertex protein.

Its subcellular location is the virion. In terms of biological role, forms the portal vertex of the capsid. This portal plays critical roles in head assembly, genome packaging, neck/tail attachment, and genome ejection. The portal protein multimerizes as a single ring-shaped homododecamer arranged around a central channel. Binds to the terminase subunits to form the packaging machine. The sequence is that of Portal protein from Vibrio phage KVP40 (isolate Vibrio parahaemolyticus/Japan/Matsuzaki/1991) (KVP40).